A 757-amino-acid polypeptide reads, in one-letter code: MDVNPTLLFLKVPAQNAISTTFPYTGDPPYSHGTGTGYTMDTVNRTHQYSEKGKWTTNTETGAPQLNPIDGPLPEDNEPSGYAQTDCVLEAMAFLEESHPGIFENSCLETMEVVQQTRVDRLTQGRQTYDWTLNRNQPAATALANTIEVFRSNGLTANESGRLIDFLKDVMESMDKEEMEITTHFQRKRRVRDNMTKKMVTQRTIGKKKQRVNKRSYLIRALTLNTMTKDAERGKLKRRAIATPGMQIRGFVYFVETLARSICEKLEQSGLPVGGNEKKAKLANVVRKMMTNSQDTELSFTITGDNTKWNENQNPRMFLAMITYITKNQPEWFRNILSIAPIMFSNKMARLGKGYMFESKRMKLRTQIPAEMLASIDLKYFNESTRKKIEKIRPLLIDGTASLSPGMMMGMFNMLSTVLGVSILNLGQKKYTKTTYWWDGLQSSDDFALIVNAPNHEGIQAGVDRFYRTCKLVGINMSKKKSYINRTGTFEFTSFFYRYGFVANFSMELPSFGVSGINESADMSIGVTVIKNNMINNDLGPATAQMALQLFIKDYRYTYRCHRGDTQIQTRRSFELKKLWEQTRSKAGLLVSDGGPNLYNIRNLHIPEVCLKWELMDEDYQGRLCNPLNPFVSHKEIESVNNAVVMPAHGPAKSMEYDAVATTHSWIPKRNRSILNTSQRGILEDEQMYQKCCNLFEKFFPSSSYRRPVGISSMVEAMVSRARIDARIDFESGRIKKEEFAEIMKICSTIEELRRQK.

Positions 50-82 (SEKGKWTTNTETGAPQLNPIDGPLPEDNEPSGY) are disordered. Positions 55–64 (WTTNTETGAP) are enriched in polar residues. 2 short sequence motifs (nuclear localization signal) span residues 187 to 195 (RKRRVRDNM) and 203 to 216 (RTIG…NKRS). The segment at 249 to 256 (RGFVYFVE) is promoter-binding site. A RdRp catalytic domain is found at 286-483 (VRKMMTNSQD…GINMSKKKSY (198 aa)).

This sequence belongs to the influenza viruses polymerase PB1 family. Influenza RNA polymerase is composed of three subunits: PB1, PB2 and PA. Interacts (via N-terminus) with PA (via C-terminus). Interacts (via C-terminus) with PB2 (via N-terminus); this interaction is essential for transcription initiation. Phosphorylated by host PRKCA.

It is found in the host nucleus. Its subcellular location is the host cytoplasm. It catalyses the reaction RNA(n) + a ribonucleoside 5'-triphosphate = RNA(n+1) + diphosphate. Functionally, RNA-dependent RNA polymerase which is responsible for replication and transcription of virus RNA segments. The transcription of viral mRNAs occurs by a unique mechanism called cap-snatching. 5' methylated caps of cellular mRNAs are cleaved after 10-13 nucleotides by PA. In turn, these short capped RNAs are used as primers by PB1 for transcription of viral mRNAs. During virus replication, PB1 initiates RNA synthesis and copy vRNA into complementary RNA (cRNA) which in turn serves as a template for the production of more vRNAs. This Influenza A virus (strain A/Udorn/307/1972 H3N2) protein is RNA-directed RNA polymerase catalytic subunit.